Consider the following 297-residue polypeptide: Probable endonuclease 4 (297 aa).

9 residues coordinate Zn(2+): H69, H110, E145, D179, H182, H214, D227, H229, and E259.

Belongs to the AP endonuclease 2 family. Zn(2+) serves as cofactor.

It carries out the reaction Endonucleolytic cleavage to 5'-phosphooligonucleotide end-products.. Endonuclease IV plays a role in DNA repair. It cleaves phosphodiester bonds at apurinic or apyrimidinic (AP) sites, generating a 3'-hydroxyl group and a 5'-terminal sugar phosphate. This is Probable endonuclease 4 from Listeria monocytogenes serovar 1/2a (strain ATCC BAA-679 / EGD-e).